The following is a 255-amino-acid chain: Octanoyltransferase (255 aa).

The interval 1–27 is disordered; sequence MPPASDAHAAPDAAASTSASPQSCAAP. The region spanning 59-240 is the BPL/LPL catalytic domain; the sequence is PDTGDEIWVV…RLIANLDGAT (182 aa). Substrate contacts are provided by residues 99 to 106, 171 to 173, and 184 to 186; these read RGGQITYH, ALG, and GLS. Cys-202 acts as the Acyl-thioester intermediate in catalysis.

Belongs to the LipB family.

It is found in the cytoplasm. It catalyses the reaction octanoyl-[ACP] + L-lysyl-[protein] = N(6)-octanoyl-L-lysyl-[protein] + holo-[ACP] + H(+). It functions in the pathway protein modification; protein lipoylation via endogenous pathway; protein N(6)-(lipoyl)lysine from octanoyl-[acyl-carrier-protein]: step 1/2. Functionally, catalyzes the transfer of endogenously produced octanoic acid from octanoyl-acyl-carrier-protein onto the lipoyl domains of lipoate-dependent enzymes. Lipoyl-ACP can also act as a substrate although octanoyl-ACP is likely to be the physiological substrate. This is Octanoyltransferase from Burkholderia thailandensis (strain ATCC 700388 / DSM 13276 / CCUG 48851 / CIP 106301 / E264).